Here is a 503-residue protein sequence, read N- to C-terminus: Cytochrome P450 11B1, mitochondrial (503 aa).

The transit peptide at Met1–Leu24 directs the protein to the mitochondrion. Residue Cys450 coordinates heme.

It belongs to the cytochrome P450 family. Heme is required as a cofactor.

The protein localises to the mitochondrion inner membrane. The catalysed reaction is a steroid + 2 reduced [adrenodoxin] + O2 + 2 H(+) = an 11beta-hydroxysteroid + 2 oxidized [adrenodoxin] + H2O. It catalyses the reaction 11-deoxycortisol + 2 reduced [adrenodoxin] + O2 + 2 H(+) = cortisol + 2 oxidized [adrenodoxin] + H2O. It carries out the reaction 21-hydroxyprogesterone + 2 reduced [adrenodoxin] + O2 + 2 H(+) = corticosterone + 2 oxidized [adrenodoxin] + H2O. The enzyme catalyses 21-hydroxyprogesterone + 2 reduced [adrenodoxin] + O2 + 2 H(+) = 18-hydroxy-11-deoxycorticosterone + 2 oxidized [adrenodoxin] + H2O. The catalysed reaction is 21-hydroxyprogesterone + 2 reduced [adrenodoxin] + O2 + 2 H(+) = 19-hydroxy-11-deoxycorticosterone + 2 oxidized [adrenodoxin] + H2O. It catalyses the reaction cortisol + 2 reduced [adrenodoxin] + O2 + 2 H(+) = 18-hydroxycortisol + 2 oxidized [adrenodoxin] + H2O. It carries out the reaction 11-deoxycortisol + 2 reduced [adrenodoxin] + O2 + 2 H(+) = 18-hydroxy-11-deoxycortisol + 2 oxidized [adrenodoxin] + H2O. It functions in the pathway steroid biosynthesis; glucocorticoid biosynthesis. It participates in steroid hormone biosynthesis. In terms of biological role, a cytochrome P450 monooxygenase involved in the biosynthesis of adrenal corticoids. Catalyzes a variety of reactions that are essential for many species, including detoxification, defense, and the formation of endogenous chemicals like steroid hormones. Steroid 11beta, 18- and 19-hydroxylase with preferred regioselectivity at 11beta, then 18, and lastly 19. Catalyzes the hydroxylation of 11-deoxycortisol and 11-deoxycorticosterone (21-hydroxyprogesterone) at 11beta position, yielding cortisol or corticosterone, respectively, but cannot produce aldosterone. Mechanistically, uses molecular oxygen inserting one oxygen atom into a substrate for hydroxylation and reducing the second into a water molecule. Two electrons are provided by NADPH via a two-protein mitochondrial transfer system comprising flavoprotein FDXR (adrenodoxin/ferredoxin reductase) and nonheme iron-sulfur protein FDX1 or FDX2 (adrenodoxin/ferredoxin). Due to its lack of 18-oxidation activity, it is incapable of generating aldosterone. Could also be involved in the androgen metabolic pathway. This Papio hamadryas ursinus (Chacma baboon) protein is Cytochrome P450 11B1, mitochondrial (CYP11B1).